The sequence spans 449 residues: Chromogranin-A (449 aa).

An N-terminal signal peptide occupies residues 1-18 (MRSAAVLALLLCAGQVIA). Residues Cys35 and Cys56 are joined by a disulfide bond. Positions 87-431 (AKERTHQQKK…EDQELESLSA (345 aa)) are disordered. Ser99 is subject to Phosphoserine. Basic and acidic residues predominate over residues 107–140 (VLEKPNDQAEPKEVTEEVSSKDAAEKRDDFKEVE). Residue Ser142 is modified to Phosphoserine. O-linked (GalNAc...) serine glycosylation occurs at Ser185. Tyr191 carries the phosphotyrosine modification. At Ser200 the chain carries Phosphoserine. The O-linked (GalNAc...) serine glycan is linked to Ser204. Ser215 carries the phosphoserine modification. Over residues 233-242 (EAEAREKAVP) the composition is skewed to basic and acidic residues. Thr249 carries O-linked (GalNAc...) threonine glycosylation. Over residues 279–297 (GAEEAKPPEGKGEWAHSRQ) the composition is skewed to basic and acidic residues. Residue Ser295 is modified to Phosphoserine. Gly312 carries the post-translational modification Glycine amide. Phosphoserine occurs at positions 315, 325, and 363. Residues 323 to 351 (QLSKEWEDAKRWSKMDQLAKELTAEKRLE) show a composition bias toward basic and acidic residues. Met364 is subject to Methionine sulfoxide. Ser390, Ser394, Ser416, and Ser430 each carry phosphoserine. The span at 406 to 423 (YPEEKKEEEGSANRRPED) shows a compositional bias: basic and acidic residues. O-linked (Xyl...) (chondroitin sulfate) serine glycosylation occurs at Ser416.

It belongs to the chromogranin/secretogranin protein family. As to quaternary structure, self-interacts; self-assembly is promoted in vitro by chondroitin sulfate attachment which occurs at mildly acidic pH conditions. Interacts with SCG3. Interacts with ITPR1 in the secretory granules. Post-translationally, in secretory granules, is attacked at both N- and C-terminal sides by proteolytic enzymes generating numerous peptides of various activities. Proteolytic processing can give rise to additional longer forms of catestatin peptides which display a less potent catecholamine release-inhibitory activity. O-glycosylated; contains chondroitin sulfate (CS). CS attachment is pH-dependent, being observed at mildly acidic conditions of pH 5 but not at neutral pH, and promotes self-assembly in vitro. In terms of tissue distribution, highest concentration of GE-25 found in adrenal medulla with lower levels present in the pituitary, the intestinal mucosa and the pancreas. Also found in the brain.

The protein localises to the secreted. Its subcellular location is the cytoplasmic vesicle. The protein resides in the secretory vesicle. It localises to the neuronal dense core vesicle. Its function is as follows. Strongly inhibits glucose induced insulin release from the pancreas. Completely inhibits catecholamine release from chromaffin cells. Functionally, has antibacterial activity against M.luteus. Not active against E.coli. In terms of biological role, inhibits catecholamine release from chromaffin cells and noradrenergic neurons by acting as a non-competitive nicotinic cholinergic antagonist. Displays antibacterial activity against Gram-positive bacteria M.luteus and B.megaterium, and Gram-negative bacteria E.coli, and antifungal activity against a variety of filamentous fungi including A.fumigatus, N.hematococca, F.culmorum, F.oxyporum, T.mentagrophytes and several forms of Candida: C.albicans, C.tropicalis, C.glabrata and C.neoform. Can induce mast cell migration, degranulation and production of cytokines and chemokines. Its function is as follows. Has antibacterial activity against Gram-positive bacteria M.luteus, B.megaterium. Not active against Gram-positive bacteria B.cereus, B.subtilis, S.pyogenes, M.fortuitum, S.aureus and L.monocytogenes and against Gram-negative bacteria E.coli, E.cloacae, S.typhimurium, K.pneumoniae and P.aeruginosa. Possesses antifungal activity against N.crassa, A.fumigatus, A.brassicicola, N.hematococca, F.culmorum and F.oxyporum and against the yeast S.cerevisiae and C.albicans. Inactive against A.benhamiae. Has antifungal activity against N.crassa, A.fumigatus, A.brassicicola, N.hematococca, F.culmorum, F.oxyporum, A.benhamiae, C.neoformans, as well as against yeasts C.albicans, and C.tropicalis. Seems to be inactive against C.glabrata. Interacts with the fungal cell wall, crosses the plasma membrane and accumulates in fungal cells where it inhibits calcineurin activity. Functionally, regulates granule biogenesis in endocrine cells by up-regulating the transcription of protease nexin 1 (SERPINE2) via a cAMP-PKA-SP1 pathway. This leads to inhibition of granule protein degradation in the Golgi complex which in turn promotes granule formation. The polypeptide is Chromogranin-A (CHGA) (Bos taurus (Bovine)).